We begin with the raw amino-acid sequence, 272 residues long: F-actin-capping protein subunit beta (272 aa).

Ser-2 carries the N-acetylserine modification. The residue at position 2 (Ser-2) is a Phosphoserine. The residue at position 235 (Lys-235) is an N6-acetyllysine. Position 263 is a phosphoserine (Val-263).

It belongs to the F-actin-capping protein beta subunit family. As to quaternary structure, component of the F-actin capping complex, composed of a heterodimer of an alpha and a beta subunit. Subunit of dynactin, a multiprotein complex part of a tripartite complex with dynein and a adapter, such as BICDL1, BICD2 or HOOK3. The dynactin complex is built around ACTR1A/ACTB filament and consists of an actin-related filament composed of a shoulder domain, a pointed end and a barbed end. Its length is defined by its flexible shoulder domain. The soulder is composed of 2 DCTN1 subunits, 4 DCTN2 and 2 DCTN3. The 4 DCNT2 (via N-terminus) bind the ACTR1A filament and act as molecular rulers to determine the length. The pointed end is important for binding dynein-dynactin cargo adapters. Consists of 4 subunits: ACTR10, DCNT4, DCTN5 and DCTN6. The barbed end is composed of a CAPZA1:CAPZB heterodimers, which binds ACTR1A/ACTB filament and dynactin and stabilizes dynactin. Interacts with ARHGAP17. Interaction with RCSD1/CAPZIP. Component of the WASH complex, composed of F-actin-capping protein subunit alpha (CAPZA1, CAPZA2 or CAPZA3), F-actin-capping protein subunit beta (CAPZB), WASH (WASHC1, WASH2P, WASH3P, WASH4P, WASH5P or WASH6P), WASHC2 (WASHC2A or WASHC2C), WASHC3, WASHC4 and WASHC5. Interacts with ACTG1. Directly interacts with CRACD; this interaction decreases binding to actin.

It is found in the cytoplasm. The protein localises to the cytoskeleton. It localises to the myofibril. The protein resides in the sarcomere. F-actin-capping proteins bind in a Ca(2+)-independent manner to the fast growing ends of actin filaments (barbed end) thereby blocking the exchange of subunits at these ends. Unlike other capping proteins (such as gelsolin and severin), these proteins do not sever actin filaments. Plays a role in the regulation of cell morphology and cytoskeletal organization. Forms, with CAPZB, the barbed end of the fast growing ends of actin filaments in the dynactin complex and stabilizes dynactin structure. The dynactin multiprotein complex activates the molecular motor dynein for ultra-processive transport along microtubules. This Homo sapiens (Human) protein is F-actin-capping protein subunit beta.